Consider the following 700-residue polypeptide: Acetoacetyl-CoA synthetase (700 aa).

A disordered region spans residues 1–35; it reads MTAVSANGKTTEKHENGAHTNGTTNGTTNGSMNGN. Positions 18–35 are enriched in low complexity; sequence AHTNGTTNGTTNGSMNGN.

This sequence belongs to the ATP-dependent AMP-binding enzyme family. As to expression, present in most cells of the organism.

The protein localises to the cytoplasm. The protein resides in the nucleus. The catalysed reaction is acetoacetate + ATP + CoA = acetoacetyl-CoA + AMP + diphosphate. Functionally, activates acetoacetate to acetoacetyl-CoA. Negatively regulates let-60 Ras activity during vulval induction. This chain is Acetoacetyl-CoA synthetase (sur-5), found in Caenorhabditis elegans.